The following is a 1000-amino-acid chain: DENN domain-containing protein 2A (1000 aa).

Disordered regions lie at residues 1–155 (MLEA…LRFQ), 174–328 (DGSA…RKSY), 427–464 (KLLD…LGDL), and 491–525 (KRVK…LKAH). Polar residues predominate over residues 34 to 43 (QLNSVPNSGP). 4 stretches are compositionally biased toward basic and acidic residues: residues 56–70 (IKDK…KEPP), 79–117 (DGQE…DSRA), 140–155 (SQHR…LRFQ), and 221–237 (HLEV…DWKG). Pro residues-rich tracts occupy residues 249-258 (PPKPFINPVP) and 288-307 (PPLP…PPPT). Over residues 427-436 (KLLDTRKLSR) the composition is skewed to basic and acidic residues. The segment covering 496–506 (LSQSTESNSGK) has biased composition (polar residues). Residue S544 is modified to Phosphoserine. The region spanning 559-708 (EYFVVVSLHK…PFPALGKTII (150 aa)) is the uDENN domain. In terms of domain architecture, cDENN spans 730 to 863 (RLEHVDFESL…LQVALEHILE (134 aa)). Positions 865–960 (RNDLACDQDG…QERELRRQDA (96 aa)) constitute a dDENN domain.

It is found in the cytoplasm. It localises to the cytoskeleton. Guanine nucleotide exchange factor (GEF) which may activate RAB9A and RAB9B. Promotes the exchange of GDP to GTP, converting inactive GDP-bound Rab proteins into their active GTP-bound form. May play a role in late endosomes back to trans-Golgi network/TGN transport. This is DENN domain-containing protein 2A (Dennd2a) from Mus musculus (Mouse).